Reading from the N-terminus, the 737-residue chain is MESGGGSSTPPGPIAALGMPDSGPGSSSLGKLQALPVGPRAHCGDPGSLAAAGDGSLDTGSTGELSGSLKIPNRDSGIDSPSSSVAGENFPCEEGLEAGPSPTVLGAHPEMALDSQVPKVTPREEADSDVGEEPDSENTPQKADKDAGLAQHSGPQKLLHIAQELLHTEETYVKRLHLLDQVFCTRLTDAGIPPEVIMGIFSNISSIHRFHGQFLLPELKTRITEEWDTNPRLGDILQKLAPFLKMYGEYVKNFDRAVGLVSTWTQRSPLFKDVVHSIQKQEVCGNLTLQHHMLEPVQRVPRYELLLKDYLKRLPQDAPDQKDAERSLELISTAANHSNAAIRKVEKMHKLLEVYEQLGGEEDIANPANELIKEGQIQKLSAKNGTPQDRHLFLFNSMILYCVPKLRLMGQKFSVREKMDISGLQVQDIVKPNTAHTFIITGRKRSLELQTRTEEEKKEWIQIIQATIEKHKQNSETFKAFGGAFSQDEDPSLSPDMPITSTSPVEPVVTTEGGSGAAGLEPRKLSSKTRRDKEKQSCKSCGETFNSITKRRHHCKLCGVVICGKCSEFKAENSRQSRVCRECFLTQPVAPESPSPEAPAKPRRSTEKTPTADPQPSLLCGPLRLSESGETWSEVWAAIPMSDPQVLHLQGGSQDGWLPRTIPLPSCKLSVPDPEERLDSGHVWKLQWAKQSWYLSASSAELQQRWLETLSTAARGDTAQDSPGALQPQVPTGAAAP.

Positions 1–151 are disordered; sequence MESGGGSSTP…KADKDAGLAQ (151 aa). Positions 126–136 are enriched in acidic residues; sequence ADSDVGEEPDS. At serine 128 the chain carries Phosphoserine. Positions 157–341 constitute a DH domain; sequence KLLHIAQELL…STAANHSNAA (185 aa). Positions 370–469 constitute a PH 1 domain; the sequence is ELIKEGQIQK…WIQIIQATIE (100 aa). The tract at residues 487–533 is disordered; sequence QDEDPSLSPDMPITSTSPVEPVVTTEGGSGAAGLEPRKLSSKTRRDK. Low complexity predominate over residues 500–512; that stretch reads TSTSPVEPVVTTE. Positions 521–533 are enriched in basic and acidic residues; it reads EPRKLSSKTRRDK. An FYVE-type zinc finger spans residues 532–588; that stretch reads DKEKQSCKSCGETFNSITKRRHHCKLCGVVICGKCSEFKAENSRQSRVCRECFLTQP. Positions 538, 541, 555, 558, 563, 566, 580, and 583 each coordinate Zn(2+). Disordered stretches follow at residues 589-620 and 713-737; these read VAPE…SLLC and AARG…AAAP. The PH 2 domain occupies 616–715; that stretch reads PSLLCGPLRL…WLETLSTAAR (100 aa).

It localises to the cytoplasm. The protein localises to the cytoskeleton. Promotes the formation of filopodia. May activate CDC42, a member of the Ras-like family of Rho- and Rac proteins, by exchanging bound GDP for free GTP. Plays a role in regulating the actin cytoskeleton and cell shape. This chain is FYVE, RhoGEF and PH domain-containing protein 3 (FGD3), found in Pongo abelii (Sumatran orangutan).